Here is a 90-residue protein sequence, read N- to C-terminus: Probable Fe(2+)-trafficking protein (90 aa).

The protein belongs to the Fe(2+)-trafficking protein family.

Functionally, could be a mediator in iron transactions between iron acquisition and iron-requiring processes, such as synthesis and/or repair of Fe-S clusters in biosynthetic enzymes. The protein is Probable Fe(2+)-trafficking protein of Coxiella burnetii (strain CbuG_Q212) (Coxiella burnetii (strain Q212)).